A 299-amino-acid chain; its full sequence is Diphthine methyl ester synthase 1 (299 aa).

S-adenosyl-L-methionine is bound by residues leucine 9, aspartate 85, glycine 88, 113–114 (SV), leucine 164, leucine 222, and histidine 247.

This sequence belongs to the diphthine synthase family.

The protein resides in the cytoplasm. The catalysed reaction is 2-[(3S)-amino-3-carboxypropyl]-L-histidyl-[translation elongation factor 2] + 4 S-adenosyl-L-methionine = diphthine methyl ester-[translation elongation factor 2] + 4 S-adenosyl-L-homocysteine + 3 H(+). The protein operates within protein modification; peptidyl-diphthamide biosynthesis. Functionally, S-adenosyl-L-methionine-dependent methyltransferase that catalyzes four methylations of the modified target histidine residue in translation elongation factor 2 (EF-2), to form an intermediate called diphthine methyl ester. The four successive methylation reactions represent the second step of diphthamide biosynthesis. The protein is Diphthine methyl ester synthase 1 (DPH5) of Candida albicans (strain SC5314 / ATCC MYA-2876) (Yeast).